Here is a 352-residue protein sequence, read N- to C-terminus: Quinolinate synthase (352 aa).

The iminosuccinate site is built by histidine 48 and serine 69. Cysteine 114 serves as a coordination point for [4Fe-4S] cluster. Iminosuccinate is bound by residues 140 to 142 and serine 157; that span reads YAN. Cysteine 201 serves as a coordination point for [4Fe-4S] cluster. Iminosuccinate contacts are provided by residues 227-229 and threonine 244; that span reads HPE. Residue cysteine 298 participates in [4Fe-4S] cluster binding.

Belongs to the quinolinate synthase family. Type 1 subfamily. Requires [4Fe-4S] cluster as cofactor.

It localises to the cytoplasm. It catalyses the reaction iminosuccinate + dihydroxyacetone phosphate = quinolinate + phosphate + 2 H2O + H(+). The protein operates within cofactor biosynthesis; NAD(+) biosynthesis; quinolinate from iminoaspartate: step 1/1. In terms of biological role, catalyzes the condensation of iminoaspartate with dihydroxyacetone phosphate to form quinolinate. The sequence is that of Quinolinate synthase from Pseudomonas putida (strain ATCC 700007 / DSM 6899 / JCM 31910 / BCRC 17059 / LMG 24140 / F1).